Here is a 290-residue protein sequence, read N- to C-terminus: ATP synthase gamma chain (290 aa).

The protein belongs to the ATPase gamma chain family. F-type ATPases have 2 components, CF(1) - the catalytic core - and CF(0) - the membrane proton channel. CF(1) has five subunits: alpha(3), beta(3), gamma(1), delta(1), epsilon(1). CF(0) has three main subunits: a, b and c.

It localises to the cell inner membrane. Produces ATP from ADP in the presence of a proton gradient across the membrane. The gamma chain is believed to be important in regulating ATPase activity and the flow of protons through the CF(0) complex. This Bacteroides fragilis (strain YCH46) protein is ATP synthase gamma chain.